The following is a 490-amino-acid chain: Bifunctional protein HldE (490 aa).

The segment at 1–330 (MDRTNIENFL…EAMAHHALEY (330 aa)) is ribokinase. 205 to 208 (NRKE) contributes to the ATP binding site. Asp275 is a catalytic residue. Residues 356–490 (FTNGCFDLLH…ERILDRYEQG (135 aa)) are cytidylyltransferase.

The protein in the N-terminal section; belongs to the carbohydrate kinase PfkB family. In the C-terminal section; belongs to the cytidylyltransferase family. As to quaternary structure, homodimer.

It carries out the reaction D-glycero-beta-D-manno-heptose 7-phosphate + ATP = D-glycero-beta-D-manno-heptose 1,7-bisphosphate + ADP + H(+). The catalysed reaction is D-glycero-beta-D-manno-heptose 1-phosphate + ATP + H(+) = ADP-D-glycero-beta-D-manno-heptose + diphosphate. It functions in the pathway nucleotide-sugar biosynthesis; ADP-L-glycero-beta-D-manno-heptose biosynthesis; ADP-L-glycero-beta-D-manno-heptose from D-glycero-beta-D-manno-heptose 7-phosphate: step 1/4. The protein operates within nucleotide-sugar biosynthesis; ADP-L-glycero-beta-D-manno-heptose biosynthesis; ADP-L-glycero-beta-D-manno-heptose from D-glycero-beta-D-manno-heptose 7-phosphate: step 3/4. Its function is as follows. Catalyzes the phosphorylation of D-glycero-D-manno-heptose 7-phosphate at the C-1 position to selectively form D-glycero-beta-D-manno-heptose-1,7-bisphosphate. In terms of biological role, catalyzes the ADP transfer from ATP to D-glycero-beta-D-manno-heptose 1-phosphate, yielding ADP-D-glycero-beta-D-manno-heptose. The protein is Bifunctional protein HldE of Syntrophotalea carbinolica (strain DSM 2380 / NBRC 103641 / GraBd1) (Pelobacter carbinolicus).